A 425-amino-acid chain; its full sequence is 3-phosphoshikimate 1-carboxyvinyltransferase (425 aa).

Residues lysine 23, serine 24, and arginine 28 each coordinate 3-phosphoshikimate. Lysine 23 provides a ligand contact to phosphoenolpyruvate. Positions 96 and 124 each coordinate phosphoenolpyruvate. The 3-phosphoshikimate site is built by threonine 170, serine 171, glutamine 172, serine 198, aspartate 314, and lysine 341. Phosphoenolpyruvate is bound at residue glutamine 172. Aspartate 314 serves as the catalytic Proton acceptor. Positions 345, 386, and 411 each coordinate phosphoenolpyruvate.

Belongs to the EPSP synthase family. Monomer.

The protein localises to the cytoplasm. It catalyses the reaction 3-phosphoshikimate + phosphoenolpyruvate = 5-O-(1-carboxyvinyl)-3-phosphoshikimate + phosphate. Its pathway is metabolic intermediate biosynthesis; chorismate biosynthesis; chorismate from D-erythrose 4-phosphate and phosphoenolpyruvate: step 6/7. Catalyzes the transfer of the enolpyruvyl moiety of phosphoenolpyruvate (PEP) to the 5-hydroxyl of shikimate-3-phosphate (S3P) to produce enolpyruvyl shikimate-3-phosphate and inorganic phosphate. The protein is 3-phosphoshikimate 1-carboxyvinyltransferase of Nostoc sp. (strain PCC 7120 / SAG 25.82 / UTEX 2576).